We begin with the raw amino-acid sequence, 760 residues long: Probable ATP-dependent RNA helicase DDX27 (760 aa).

The disordered stretch occupies residues 1-50; the sequence is MLAELGFIRTIGENDEVPVEPESDSGDEEEEGPIVLGRKQKALQKNRSAD. The segment covering 13 to 32 has biased composition (acidic residues); it reads ENDEVPVEPESDSGDEEEEG. 3 positions are modified to phosphoserine: S23, S25, and S48. The Required for interaction with the PEBOW complex signature appears at 55–57; the sequence is FVF. A disordered region spans residues 80–149; that stretch reads KRAATTLDEK…TDYSSEDEEI (70 aa). Residues 98 to 122 show a composition bias toward basic and acidic residues; it reads KAEDKEAKSGKVEEKEGQADSDLKG. The segment covering 126 to 148 has biased composition (acidic residues); it reads PGEDEAGSKDEDSETDYSSEDEE. 2 positions are modified to phosphoserine: S133 and S144. A Nuclear localization signal motif is present at residues 157–166; it reads KVKEKKKKKK. Positions 184-212 match the Q motif motif; the sequence is LSFQDMNLSRPLLKAITAMGFKQPTPIQK. One can recognise a Helicase ATP-binding domain in the interval 215 to 389; it reads IPVGLLGKDI…SVSLKNPVRI (175 aa). Residue 228–235 coordinates ATP; the sequence is AATGTGKT. The DEAD box signature appears at 337–340; it reads DEAD. Positions 419–569 constitute a Helicase C-terminal domain; sequence IVAALLMRTF…DVILKFRDKI (151 aa). Disordered stretches follow at residues 605–624 and 679–760; these read KGKE…TKEE and RLAK…KRKK. 2 stretches are compositionally biased toward basic residues: residues 682–691 and 744–760; these read KRNRRTKRAR and RQRR…KRKK.

It belongs to the DEAD box helicase family. DDX27/DRS1 subfamily. As to quaternary structure, associates with PeBoW complex, composed of BOP1, PES1 and WDR12. Interacts directly with BOP1 and PES1.

It localises to the nucleus. It is found in the nucleolus. The protein resides in the chromosome. The enzyme catalyses ATP + H2O = ADP + phosphate + H(+). Probable ATP-dependent RNA helicase. Component of the nucleolar ribosomal RNA (rRNA) processing machinery that regulates 3' end formation of ribosomal 47S rRNA. The chain is Probable ATP-dependent RNA helicase DDX27 (Ddx27) from Mus musculus (Mouse).